The following is a 564-amino-acid chain: Dihydropyrimidinase-related protein 5 (564 aa).

Threonine 509 and threonine 514 each carry phosphothreonine. Phosphoserine is present on residues serine 532 and serine 538. Position 559 is an omega-N-methylarginine (arginine 559).

It belongs to the metallo-dependent hydrolases superfamily. Hydantoinase/dihydropyrimidinase family. As to quaternary structure, homotetramer, and heterotetramer with other DPYS-like proteins. Interacts with DPYSL2, DPYSL3 and DPYSL4. Interacts with SEPTIN4 isoform 4. Interacts with MAP2 and TUBB3. As to expression, detected in brain.

The protein localises to the cytoplasm. In terms of biological role, involved in the negative regulation of dendrite outgrowth. The sequence is that of Dihydropyrimidinase-related protein 5 (Dpysl5) from Mus musculus (Mouse).